The following is a 301-amino-acid chain: G-protein coupled receptor homolog U51 (301 aa).

The Extracellular portion of the chain corresponds to 1-15 (MEKETKSLAWPATAE). The chain crosses the membrane as a helical span at residues 16–36 (FYGWVFIFSSIQLCTVVFLTV). The Cytoplasmic portion of the chain corresponds to 37-48 (RFNGFKVGREYA). Residues 49–69 (VFTFAGMSFNCFLLPIKMGLL) form a helical membrane-spanning segment. Residues 70-82 (SGHWTLPRDFCAI) are Extracellular-facing. The chain crosses the membrane as a helical span at residues 83 to 103 (LLYIDDFSAYFSSWSLVFMAI). Residues 104–122 (ERINYFCYSTPLLNENSKA) are Cytoplasmic-facing. A helical membrane pass occupies residues 123–143 (LAKVCFPIVWVVSGVQALQML). Residues 144–168 (NNYKATALQNETGQCFLAFLRSGHD) are Extracellular-facing. Asn-153 is a glycosylation site (N-linked (GlcNAc...) asparagine; by host). The chain crosses the membrane as a helical span at residues 169–189 (MWLMLVYSVVIPVMLVFFYLY). Residues 190–199 (SKNFMLLKDE) are Cytoplasmic-facing. A helical transmembrane segment spans residues 200-220 (LSSVTTYLCIYLLLGTIAHLP). Residues 221–238 (KAALSEIESDKIFYGLRD) lie on the Extracellular side of the membrane. The helical transmembrane segment at 239–259 (IFMALPVLKVYYISAMAYCMA) threads the bilayer. Residues 260 to 301 (CDDHTVPVRLCSIWLVNLCKKCFSCTRREKGSDLEVGIKMLK) lie on the Cytoplasmic side of the membrane.

The protein belongs to the G-protein coupled receptor 1 family.

It localises to the host cell membrane. In Homo sapiens (Human), this protein is G-protein coupled receptor homolog U51 (U51).